The chain runs to 173 residues: Dual-action ribosomal maturation protein DarP (173 aa).

It belongs to the DarP family.

The protein localises to the cytoplasm. Member of a network of 50S ribosomal subunit biogenesis factors which assembles along the 30S-50S interface, preventing incorrect 23S rRNA structures from forming. Promotes peptidyl transferase center (PTC) maturation. The polypeptide is Dual-action ribosomal maturation protein DarP (Pseudomonas syringae pv. tomato (strain ATCC BAA-871 / DC3000)).